The sequence spans 133 residues: Interferon alpha-inducible protein 27-like protein 2 (133 aa).

3 consecutive transmembrane segments (helical) span residues 8-28 (AAIGGALAVAAVPAVLGAVGF), 51-71 (GGGVAAGSLVATLQSVGAAGL), and 73-93 (TSSNILLGSIGSAFGALLGGA). Residues 93 to 133 (AKRASPSPPPGGPRPEGEQPGENVPQVEPPKSPLGPEKHEK) form a disordered region.

This sequence belongs to the IFI6/IFI27 family.

It localises to the mitochondrion membrane. Its function is as follows. Plays a role in the apoptotic process and has a pro-apoptotic activity. This is Interferon alpha-inducible protein 27-like protein 2 from Bos taurus (Bovine).